We begin with the raw amino-acid sequence, 124 residues long: Testis-expressed protein 54 (124 aa).

The span at 1–10 shows a compositional bias: basic and acidic residues; the sequence is MGCCQDKDFE. Disordered stretches follow at residues 1–77 and 90–124; these read MGCC…SNES and FGRRGSSRPSKRQPDQIRKQESPIREGNQEEPEKG. Residues 11–30 show a composition bias toward acidic residues; sequence MSDEQSKEEESEDGREDETT. 2 stretches are compositionally biased toward basic and acidic residues: residues 34–50 and 101–124; these read RGPRECERGLPEGRGEL and RQPDQIRKQESPIREGNQEEPEKG.

Expressed in Testis.

In Homo sapiens (Human), this protein is Testis-expressed protein 54.